A 178-amino-acid chain; its full sequence is Cysteine-rich venom protein VAR3 (178 aa).

An N-terminal signal peptide occupies residues 1–22 (MILLKLYLTLAAILCQSRGTTS). The region spanning 41–169 (NKHNDLRRTV…PLKYFLVCQY (129 aa)) is the SCP domain. 3 cysteine pairs are disulfide-bonded: cysteine 77–cysteine 156, cysteine 95–cysteine 170, and cysteine 151–cysteine 167.

The protein belongs to the CRISP family. Contains 8 disulfide bonds. In terms of tissue distribution, expressed by the venom gland.

It localises to the secreted. Functionally, blocks ryanodine receptors, and potassium channels. In Varanus acanthurus (Ridge-tailed monitor), this protein is Cysteine-rich venom protein VAR3.